Reading from the N-terminus, the 207-residue chain is Superoxide dismutase [Fe] (207 aa).

4 residues coordinate Fe cation: His-28, His-76, Asp-160, and His-164.

Belongs to the iron/manganese superoxide dismutase family. In terms of assembly, homotetramer. The cofactor is Fe cation.

It localises to the secreted. The catalysed reaction is 2 superoxide + 2 H(+) = H2O2 + O2. Its function is as follows. Destroys superoxide anion radicals which are normally produced within the cells and which are toxic to biological systems. The protein is Superoxide dismutase [Fe] (sodB) of Mycobacterium tuberculosis (strain CDC 1551 / Oshkosh).